Consider the following 330-residue polypeptide: MENNIDLNVYFCFVNRPCTGGDFVNLDHVRTLRKLGINASILLAGNQSEEIVNSFGSLPVVILNEEIEFSSQDIFIVPEVMQVLYDLASKMTVFPRMIMHNQNPFYTGYGFLSAQHINEHRLERIIVPSSYTKYKLQEIGVTKPIDIIHPYIPDYFKPAEKQREVIQIAFSRRKRSAEFDIFKFYFLSLYSHKHSVNFVNIQGLTREEVAKVMSEAAIFISFAERESLGLMTLEAMASGCHVIGFSGYTDIYNNEVIDDSVGDWIGEGEYTLFAQKVCQAIDDFVNGKMNPKIENGLRLIEQRFRIRHFEQEVKRVYGNIFDYDLENSRS.

This sequence belongs to the glycosyltransferase group 1 family. Does not require a metal cofactor. is required as a cofactor.

The protein localises to the cytoplasm. It participates in protein modification; protein glycosylation. In terms of biological role, catalyzes the transfer of a glucose moiety from UDP-glucose to another glucose that is N-linked to an asparagine within a peptide or protein. Can act in a repetitive manner, and this way it elongates the N-linked glucose by a glycan chain consisting of several alpha-1-&gt;6 linked glucose residues. Is able to add up to six glucose units in vitro. Cannot use UDP-Gal, UDP-GlcNAc or UDP-GalNAc as a substrate donor. The protein is Alpha-1,6-glucosyltransferase of Actinobacillus pleuropneumoniae serotype 7 (strain AP76).